Here is a 715-residue protein sequence, read N- to C-terminus: Glycine--tRNA ligase beta subunit (715 aa).

It belongs to the class-II aminoacyl-tRNA synthetase family. Tetramer of two alpha and two beta subunits.

Its subcellular location is the cytoplasm. The enzyme catalyses tRNA(Gly) + glycine + ATP = glycyl-tRNA(Gly) + AMP + diphosphate. The chain is Glycine--tRNA ligase beta subunit from Nitrosomonas eutropha (strain DSM 101675 / C91 / Nm57).